Consider the following 314-residue polypeptide: tRNA pseudouridine synthase B (314 aa).

Substrate is bound at residue H43. The active-site Nucleophile is the D48. Residues Y76, Y179, and L200 each contribute to the substrate site.

The protein belongs to the pseudouridine synthase TruB family. Type 1 subfamily.

It catalyses the reaction uridine(55) in tRNA = pseudouridine(55) in tRNA. In terms of biological role, responsible for synthesis of pseudouridine from uracil-55 in the psi GC loop of transfer RNAs. The protein is tRNA pseudouridine synthase B of Salmonella paratyphi A (strain ATCC 9150 / SARB42).